A 102-amino-acid polypeptide reads, in one-letter code: uncharacterized protein (102 aa).

The helical transmembrane segment at 5 to 27 threads the bilayer; it reads IYRSNLVIVITLFVSLSYYHTCF.

The protein resides in the host membrane. This is an uncharacterized protein from Microplitis demolitor (Parasitoid wasp).